Consider the following 1073-residue polypeptide: Guanylyl cyclase C (1073 aa).

The N-terminal stretch at 1–23 is a signal peptide; the sequence is MKTLLLDLALWSLLFQPGWLSFS. At 24–430 the chain is on the extracellular side; the sequence is SQVSQNCHNG…PNDITGRGPQ (407 aa). N-linked (GlcNAc...) asparagine glycosylation is found at asparagine 32, asparagine 75, asparagine 79, asparagine 195, asparagine 284, asparagine 307, asparagine 345, and asparagine 402. The chain crosses the membrane as a helical span at residues 431-454; the sequence is ILMIAVFTLTGAVVLLLLVALLML. The Cytoplasmic segment spans residues 455-1073; the sequence is RKYRKDYELR…NTTDKESTYF (619 aa). The Protein kinase domain occupies 489–749; it reads LKIDDDKRRD…KIETTLAKIF (261 aa). A Guanylate cyclase domain is found at 824–954; sequence TIYFSDIVGF…DTVNTASRME (131 aa).

The protein belongs to the adenylyl cyclase class-4/guanylyl cyclase family. Homotrimer. Interacts via its C-terminal region with NHERF4. Interacts with the lectin chaperone VIP36. Post-translationally, glycosylation at Asn-75 and/or Asn-79 is required for interaction with VIP36 while glycosylation at Asn-345 and Asn-402 modulates ligand-mediated GUCY2C activation.

The protein resides in the cell membrane. Its subcellular location is the endoplasmic reticulum membrane. It carries out the reaction GTP = 3',5'-cyclic GMP + diphosphate. Guanylyl cyclase that catalyzes synthesis of cyclic GMP (cGMP) from GTP. Receptor for the E.coli heat-stable enterotoxin; E.coli enterotoxin markedly stimulates the accumulation of cGMP in mammalian cells expressing GUCY2C. Also activated by the endogenous peptides guanylin and uroguanylin. The sequence is that of Guanylyl cyclase C from Homo sapiens (Human).